We begin with the raw amino-acid sequence, 522 residues long: Lysine--tRNA ligase (522 aa).

The 'HIGH' region motif lies at 44–52 (PSGLPHIGT). The 'KMSKS' region signature appears at 290–294 (KISKS). Lys293 lines the ATP pocket.

It belongs to the class-I aminoacyl-tRNA synthetase family.

The protein localises to the cytoplasm. It carries out the reaction tRNA(Lys) + L-lysine + ATP = L-lysyl-tRNA(Lys) + AMP + diphosphate. The protein is Lysine--tRNA ligase of Rickettsia bellii (strain OSU 85-389).